Here is a 486-residue protein sequence, read N- to C-terminus: Protein nucleotidyltransferase YdiU (486 aa).

ATP-binding residues include glycine 90, glycine 92, arginine 93, lysine 113, aspartate 125, glycine 126, arginine 176, and arginine 183. Catalysis depends on aspartate 252, which acts as the Proton acceptor. Residues asparagine 253 and aspartate 262 each contribute to the Mg(2+) site. Residue aspartate 262 coordinates ATP.

The protein belongs to the SELO family. Mg(2+) serves as cofactor. Mn(2+) is required as a cofactor.

The enzyme catalyses L-seryl-[protein] + ATP = 3-O-(5'-adenylyl)-L-seryl-[protein] + diphosphate. It catalyses the reaction L-threonyl-[protein] + ATP = 3-O-(5'-adenylyl)-L-threonyl-[protein] + diphosphate. It carries out the reaction L-tyrosyl-[protein] + ATP = O-(5'-adenylyl)-L-tyrosyl-[protein] + diphosphate. The catalysed reaction is L-histidyl-[protein] + UTP = N(tele)-(5'-uridylyl)-L-histidyl-[protein] + diphosphate. The enzyme catalyses L-seryl-[protein] + UTP = O-(5'-uridylyl)-L-seryl-[protein] + diphosphate. It catalyses the reaction L-tyrosyl-[protein] + UTP = O-(5'-uridylyl)-L-tyrosyl-[protein] + diphosphate. Its function is as follows. Nucleotidyltransferase involved in the post-translational modification of proteins. It can catalyze the addition of adenosine monophosphate (AMP) or uridine monophosphate (UMP) to a protein, resulting in modifications known as AMPylation and UMPylation. The chain is Protein nucleotidyltransferase YdiU from Pseudomonas aeruginosa (strain UCBPP-PA14).